A 419-amino-acid polypeptide reads, in one-letter code: MAGDSRNAMNQDMEIGVTPRDPKKIPKQARDYIPIATDRTRLLSEGKKPRQRYMEKSGKCNVHHGNVQETYRYLSDLFTTLVDLKWRFNLLVFTMVYTITWLFFGFIWWLIAYIRGDLDHVGDREWIPCVENLSGFVSAFLFSIETETTIGYGFRVITEKCPEGIVLLLVQAILGSIVNAFMVGCMFVKISQPKKRAETLMFSNNAVISLRDEKLCLMFRVGDLRNSHIVEASIRAKLIKSRQTKEGEFIPLNQTDINVGFDTGDDRLFLVSPLIICHEINEKSPFWEMSRAQLTQEEFEVVVILEGMVEATGMTCQARSSYMDTEVLWGHRFTPVLTLEKGFYEVDYNTFHDTYETNTPSCCAKELAEMKREGRLLQYHPSPPLPGGCVGAELGAEAEQEGEEEPEGLSGSQETKDSA.

Residues 1 to 24 are disordered; it reads MAGDSRNAMNQDMEIGVTPRDPKK. Residues 1-86 are Cytoplasmic-facing; sequence MAGDSRNAMN…LFTTLVDLKW (86 aa). Serine 5 bears the Phosphoserine mark. The chain crosses the membrane as a helical span at residues 87–111; sequence RFNLLVFTMVYTITWLFFGFIWWLI. Topologically, residues 112-135 are extracellular; it reads AYIRGDLDHVGDREWIPCVENLSG. The segment at residues 136–147 is an intramembrane region (helical; Pore-forming); the sequence is FVSAFLFSIETE. The segment at residues 148 to 154 is an intramembrane region (pore-forming); the sequence is TTIGYGF. The Selectivity filter signature appears at 149-154; sequence TIGYGF. Residues 155 to 163 are Extracellular-facing; the sequence is RVITEKCPE. A helical membrane pass occupies residues 164-185; that stretch reads GIVLLLVQAILGSIVNAFMVGC. Topologically, residues 186–419 are cytoplasmic; sequence MFVKISQPKK…SGSQETKDSA (234 aa). Positions 381 to 419 are disordered; that stretch reads PSPPLPGGCVGAELGAEAEQEGEEEPEGLSGSQETKDSA. Positions 396 to 407 are enriched in acidic residues; the sequence is AEAEQEGEEEPE.

The protein belongs to the inward rectifier-type potassium channel (TC 1.A.2.1) family. KCNJ5 subfamily. In terms of assembly, associates with KCNJ3/GIRK1 or KCNJ6/GIRK2 to form a G-protein-activated heteromultimer pore-forming unit. The resulting inward current is much larger.

The protein resides in the membrane. The catalysed reaction is K(+)(in) = K(+)(out). With respect to regulation, heteromultimer composed of KCNJ3/GIRK1 and KCNJ5/GIRK4 is activated by phosphatidylinositol 4,5 biphosphate (PtdIns(4,5)P2). In terms of biological role, inward rectifier potassium channels are characterized by a greater tendency to allow potassium to flow into the cell rather than out of it. Their voltage dependence is regulated by the concentration of extracellular potassium; as external potassium is raised, the voltage range of the channel opening shifts to more positive voltages. The inward rectification is mainly due to the blockage of outward current by internal magnesium. This receptor plays a crucial role in regulating the heartbeat. Can be blocked by external barium. This potassium channel is controlled by G proteins. The protein is G protein-activated inward rectifier potassium channel 4 (KCNJ5) of Bos taurus (Bovine).